A 250-amino-acid polypeptide reads, in one-letter code: Aquaporin SIP2-1 (250 aa).

2 helical membrane passes run 14-34 and 55-75; these read PWLV…GALV and VALS…TGGA. Residues 78-80 carry the NPA 1 motif; that stretch reads NPL. Transmembrane regions (helical) follow at residues 95–115, 132–152, 178–200, and 211–231; these read LYLF…ILGV, SVGV…VVIV, FHLL…AWAY, and LLVY…VVTL. Residues 191–193 carry the NPA 2 motif; the sequence is NPA.

This sequence belongs to the MIP/aquaporin (TC 1.A.8) family. SIP (TC 1.A.8.10) subfamily. In terms of tissue distribution, expressed in leaves and anthers, and at lower levels in roots.

The protein resides in the membrane. Aquaporins facilitate the transport of water and small neutral solutes across cell membranes. This Oryza sativa subsp. japonica (Rice) protein is Aquaporin SIP2-1 (SIP2-1).